The sequence spans 202 residues: LexA repressor (202 aa).

A DNA-binding region (H-T-H motif) is located at residues 28 to 48 (RAEIAQRLGFRSPNAAEEHLK). Catalysis depends on for autocatalytic cleavage activity residues serine 119 and lysine 156.

Belongs to the peptidase S24 family. Homodimer.

The catalysed reaction is Hydrolysis of Ala-|-Gly bond in repressor LexA.. Functionally, represses a number of genes involved in the response to DNA damage (SOS response), including recA and lexA. Binds to the 16 bp palindromic sequence 5'-CTGTATATATATACAG-3'. In the presence of single-stranded DNA, RecA interacts with LexA causing an autocatalytic cleavage which disrupts the DNA-binding part of LexA, leading to derepression of the SOS regulon and eventually DNA repair. This is LexA repressor from Cronobacter sakazakii (strain ATCC BAA-894) (Enterobacter sakazakii).